The primary structure comprises 327 residues: Polyadenylate-binding protein-interacting protein 9 (327 aa).

Residues 59–69 (KLNPLAKEFFP) carry the PAM2-like motif. The segment covering 97–113 (KQSGEEFDLDAKKDDNT) has biased composition (basic and acidic residues). A disordered region spans residues 97–132 (KQSGEEFDLDAKKDDNTRKRRNYSQGRRRLTGRISK). A Bipartite nuclear localization signal motif is present at residues 114–125 (RKRRNYSQGRRR). A compositionally biased stretch (basic residues) spans 114 to 127 (RKRRNYSQGRRRLT). RRM domains follow at residues 141 to 216 (RTVY…PSKT) and 238 to 314 (RTIY…PSKT). The disordered stretch occupies residues 308–327 (RVSPSKTPVRPRITRPPSTN).

The protein resides in the nucleus. The polypeptide is Polyadenylate-binding protein-interacting protein 9 (CID9) (Arabidopsis thaliana (Mouse-ear cress)).